The sequence spans 190 residues: Threonylcarbamoyl-AMP synthase (190 aa).

One can recognise a YrdC-like domain in the interval 7–190 (RAALSDVLQA…ALTGKQFRQG (184 aa)).

Belongs to the SUA5 family. TsaC subfamily.

The protein resides in the cytoplasm. The catalysed reaction is L-threonine + hydrogencarbonate + ATP = L-threonylcarbamoyladenylate + diphosphate + H2O. Functionally, required for the formation of a threonylcarbamoyl group on adenosine at position 37 (t(6)A37) in tRNAs that read codons beginning with adenine. Catalyzes the conversion of L-threonine, HCO(3)(-)/CO(2) and ATP to give threonylcarbamoyl-AMP (TC-AMP) as the acyladenylate intermediate, with the release of diphosphate. In Yersinia enterocolitica serotype O:8 / biotype 1B (strain NCTC 13174 / 8081), this protein is Threonylcarbamoyl-AMP synthase.